The following is a 983-amino-acid chain: Protein translocase subunit SecA (983 aa).

Residues Gln83, 101–105, and Asp489 contribute to the ATP site; that span reads GEGKT. A disordered region spans residues 948–983; sequence ISSEEENNNEKTNININEDLERTKGEAQQTAKNPNE. Polar residues predominate over residues 973 to 983; that stretch reads EAQQTAKNPNE.

This sequence belongs to the SecA family. In terms of assembly, monomer and homodimer. Part of the essential Sec protein translocation apparatus which comprises SecA, SecYEG and auxiliary proteins SecDF. Other proteins may also be involved.

The protein localises to the cell membrane. It localises to the cytoplasm. The enzyme catalyses ATP + H2O + cellular proteinSide 1 = ADP + phosphate + cellular proteinSide 2.. Functionally, part of the Sec protein translocase complex. Interacts with the SecYEG preprotein conducting channel. Has a central role in coupling the hydrolysis of ATP to the transfer of proteins into and across the cell membrane, serving as an ATP-driven molecular motor driving the stepwise translocation of polypeptide chains across the membrane. This Mesomycoplasma hyopneumoniae (strain 7448) (Mycoplasma hyopneumoniae) protein is Protein translocase subunit SecA.